An 80-amino-acid chain; its full sequence is DNA-directed RNA polymerase RPB10 homolog (80 aa).

4 residues coordinate Zn(2+): cysteine 7, cysteine 10, cysteine 65, and cysteine 66.

It belongs to the archaeal RpoN/eukaryotic RPB10 RNA polymerase subunit family. Part of the viral DNA-directed RNA polymerase that consists of 8 polII-like subunits (RPB1, RPB2, RPB3, RPB5, RPB6, RPB7, RPB9, RPB10), a capping enzyme and a termination factor.

It localises to the host cytoplasm. Component of the DNA-directed RNA polymerase (RNAP) that catalyzes the transcription in the cytoplasm of viral DNA into RNA using the four ribonucleoside triphosphates as substrates. The protein is DNA-directed RNA polymerase RPB10 homolog of African swine fever virus (isolate Pig/Kenya/KEN-50/1950) (ASFV).